Here is a 200-residue protein sequence, read N- to C-terminus: Eukaryotic translation initiation factor isoform 4E (200 aa).

MRNA contacts are provided by residues 44 to 49 (QGVAWG), lysine 76, and 94 to 95 (WE). A disulfide bridge connects residues cysteine 99 and cysteine 138. MRNA-binding positions include 145–150 (RRSQDK) and 189–192 (KRER).

It belongs to the eukaryotic initiation factor 4E family. As to quaternary structure, EIF4F is a multi-subunit complex, the composition of which varies with external and internal environmental conditions. It is composed of at least EIF4A, EIF4E and EIF4G. EIF4E is also known to interact with other partners. In higher plants two isoforms of EIF4F have been identified, named isoform EIF4F and isoform EIF(iso)4F. Isoform EIF4F has subunits p220 and p26, whereas isoform EIF(iso)4F has subunits p82 and p28. (Microbial infection) Interacts with viral genome-linked protein (VPg); this interaction is possible in susceptible hosts but impaired in resistant plants. According to the redox status, the Cys-99-Cys-138 disulfide bridge may have a role in regulating protein function by affecting its ability to bind capped mRNA. Mostly expressed in roots and leaves, and, to a lower extent, in stems, flowers and immature green fruits.

It localises to the cytoplasm. The protein localises to the nucleus. Its function is as follows. Component of the protein complex eIF4F, which is involved in the recognition of the mRNA cap, ATP-dependent unwinding of 5'-terminal secondary structure and recruitment of mRNA to the ribosome. Recognizes and binds the 7-methylguanosine-containing mRNA cap during an early step in the initiation of protein synthesis and facilitates ribosome binding by inducing the unwinding of the mRNAs secondary structures. Key component of recessive resistance to potyviruses. In terms of biological role, (Microbial infection) Susceptibility host factor required for viral infection by recruiting viral RNAs to the host ribosomal complex via an interaction with viral genome-linked protein (VPg). The chain is Eukaryotic translation initiation factor isoform 4E from Solanum lycopersicum (Tomato).